Here is a 379-residue protein sequence, read N- to C-terminus: MGYARKVGWVTAGLVIGAGACYCIYRLTRGRKQNKEKMAEGGPGDVEDAGDCSGARYNDWSDDDDDSNESKSIVWYPPWARIGTEAGTRARARARARATRARRAVQKRASPNSDDTVLSPQELQKVLCLVEMSEKPYILEAALIALGNNAAYAFNRDIIRDLGGLPIVAKILNTRDPIVKEKALIVLNNLSVNAENQRRLKIYMNQVCDDTVTSRLNSSVQLAGLRLLTNMTVTNEYQHILANSISDFFRLFSAGNEETKLQVLKLLLNLAENPAMTRELLGAHVPSSLGSLFNKKEYKEVILKLLSIFENINDNFKWEENEPAQNHFSEGSLFFFLKEFQVCADKVLGIESHHDFQVRVKVGKFVTKLTERMFPKSQE.

Residues 1 to 6 (MGYARK) lie on the Mitochondrial intermembrane side of the membrane. Mitochondrion outer membrane (MOM)-targeting sequence stretches follow at residues 1–6 (MGYARK) and 26–37 (RLTRGRKQNKEK). Residues 7 to 29 (VGWVTAGLVIGAGACYCIYRLTR) form a helical; Signal-anchor membrane-spanning segment. At 30-379 (GRKQNKEKMA…TERMFPKSQE (350 aa)) the chain is on the cytoplasmic side. A disordered region spans residues 34 to 69 (NKEKMAEGGPGDVEDAGDCSGARYNDWSDDDDDSNE). A phosphoserine mark is found at S61, S67, and S72. The nuclear localization signal stretch occupies residues 89-98 (RARARARARA). S110 is modified (phosphoserine). 3 ARM repeats span residues 111–151 (PNSD…NNAA), 153–192 (AFNR…NLSV), and 233–272 (VTNE…NLAE).

This sequence belongs to the eutherian X-chromosome-specific Armcx family. In terms of assembly, interacts (via ARM domain) with MIRO1, MIRO2 and TRAK2. The interaction with Miro is calcium-dependent. Interacts with Sox10.

It is found in the mitochondrion outer membrane. The protein resides in the cytoplasm. Its subcellular location is the nucleus. Functionally, regulates mitochondrial aggregation and transport in axons in living neurons. May link mitochondria to the Trak2-kinesin motor complex via its interaction with Miro and Trak2. Mitochondrial distribution and dynamics is regulated through Armcx3 protein degradation, which is promoted by PCK and negatively regulated by Wnt1. Enhances the Sox10-mediated transactivation of the neuronal acetylcholine receptor subunit alpha-3 and beta-4 subunit gene promoters. This is Armadillo repeat-containing X-linked protein 3 (Armcx3) from Rattus norvegicus (Rat).